The sequence spans 443 residues: Ribosomal protein uS12 methylthiotransferase RimO (443 aa).

The 112-residue stretch at 5 to 116 (PSVAVAHLGC…IVDVIQRAEA (112 aa)) folds into the MTTase N-terminal domain. [4Fe-4S] cluster-binding residues include C14, C50, C79, C154, C158, and C161. A Radical SAM core domain is found at 140–370 (TTTEGTAYVR…ALQQPISWQQ (231 aa)). The region spanning 372–442 (QQEVGKTVQV…AYDLQGQLVS (71 aa)) is the TRAM domain.

The protein belongs to the methylthiotransferase family. RimO subfamily. [4Fe-4S] cluster serves as cofactor.

It is found in the cytoplasm. The enzyme catalyses L-aspartate(89)-[ribosomal protein uS12]-hydrogen + (sulfur carrier)-SH + AH2 + 2 S-adenosyl-L-methionine = 3-methylsulfanyl-L-aspartate(89)-[ribosomal protein uS12]-hydrogen + (sulfur carrier)-H + 5'-deoxyadenosine + L-methionine + A + S-adenosyl-L-homocysteine + 2 H(+). In terms of biological role, catalyzes the methylthiolation of an aspartic acid residue of ribosomal protein uS12. The chain is Ribosomal protein uS12 methylthiotransferase RimO from Acaryochloris marina (strain MBIC 11017).